A 266-amino-acid chain; its full sequence is Putative zinc finger protein 034R (266 aa).

Positions 84-176 (SPTKSVDKAA…GPKRDSTQQP (93 aa)) are disordered. A compositionally biased stretch (basic and acidic residues) spans 88–100 (SVDKAAQKEKKMP). 2 stretches are compositionally biased toward polar residues: residues 105–119 (KPTT…QGIL) and 160–176 (GVSQ…TQQP). The C3H1-type zinc-finger motif lies at 180–192 (CKSVLKQAKCYFG).

This sequence belongs to the IIV-6 077L family.

This chain is Putative zinc finger protein 034R, found in Aedes vexans (Inland floodwater mosquito).